A 380-amino-acid polypeptide reads, in one-letter code: Acetylornithine deacetylase (380 aa).

H79 is a Zn(2+) binding site. The active site involves D81. D109 lines the Zn(2+) pocket. E139 is an active-site residue. Residues E140, E164, and H351 each coordinate Zn(2+).

The protein belongs to the peptidase M20A family. ArgE subfamily. In terms of assembly, homodimer. The cofactor is Zn(2+). Requires Co(2+) as cofactor. Glutathione serves as cofactor.

The protein resides in the cytoplasm. The catalysed reaction is N(2)-acetyl-L-ornithine + H2O = L-ornithine + acetate. It participates in amino-acid biosynthesis; L-arginine biosynthesis; L-ornithine from N(2)-acetyl-L-ornithine (linear): step 1/1. Its function is as follows. Catalyzes the hydrolysis of the amide bond of N(2)-acetylated L-amino acids. Cleaves the acetyl group from N-acetyl-L-ornithine to form L-ornithine, an intermediate in L-arginine biosynthesis pathway, and a branchpoint in the synthesis of polyamines. The sequence is that of Acetylornithine deacetylase from Myxococcus xanthus.